We begin with the raw amino-acid sequence, 374 residues long: Histone acetyltransferase type B catalytic subunit (374 aa).

Interaction with histone H4 N-terminus regions lie at residues 42 to 44 and 194 to 196; these read DSE and YKY. One can recognise an N-acetyltransferase domain in the interval 135 to 303; it reads VVYKSSLVDD…ESSRKSLKLE (169 aa). The interval 197-205 is interaction with HAT2; sequence WHYLGAKSF. Acetyl-CoA is bound by residues 220-222 and 227-233; these read FLI and QNKGHGS. The active-site Proton donor/acceptor is E255. The acetyl-CoA site is built by N258 and R267. S354 carries the phosphoserine modification.

This sequence belongs to the HAT1 family. In terms of assembly, component of the HAT-B complex composed of at least HAT1 and HAT2. In the cytoplasm, this complex binds to the histone H4 tail. In the nucleus, the HAT-B complex has an additional component, the histone H3/H4 chaperone HIF1.

Its subcellular location is the cytoplasm. The protein resides in the nucleus. The catalysed reaction is L-lysyl-[protein] + acetyl-CoA = N(6)-acetyl-L-lysyl-[protein] + CoA + H(+). Functionally, catalytic component of the histone acetylase B (HAT-B) complex. Acetylates 'Lys-12' of free histone H4 in the cytoplasm. The complex is also found in the nucleus, however it is not certain that it modifies histone H4 when packaged in chromatin. Histone H4 'Lys-12' acetylation is required for telomeric silencing. Has intrinsic substrate specificity that modifies lysine in recognition sequence GXGKXG. Involved in DNA double-strand break repair. In Saccharomyces cerevisiae (strain ATCC 204508 / S288c) (Baker's yeast), this protein is Histone acetyltransferase type B catalytic subunit (HAT1).